The chain runs to 242 residues: MRIYIEEDYEKMSKKAALIVASQIILNPQSVLGLATGSTPVGMYQALVEMYEKDDIDFSEVTTINLDEYYGLSKDNPQSYYSYMMENLFNYINVAKERIHIPNGMARNVVQECLGYEEQIRIAGGIDLQVLGIGANGHIGFNEPSNKLNIRTHLVDLSLETIEDNSRFFENKAEVPRQALSIGIATIMKANQIILLASGASKAEAIREMTSGHLNTQVPASVLQTHPNVSLIIDKDAARLIE.

The active-site Proton acceptor; for enolization step is aspartate 67. The active-site For ring-opening step is the asparagine 136. Histidine 138 acts as the Proton acceptor; for ring-opening step in catalysis. Glutamate 143 functions as the For ring-opening step in the catalytic mechanism.

It belongs to the glucosamine/galactosamine-6-phosphate isomerase family. NagB subfamily.

It carries out the reaction alpha-D-glucosamine 6-phosphate + H2O = beta-D-fructose 6-phosphate + NH4(+). It functions in the pathway amino-sugar metabolism; N-acetylneuraminate degradation; D-fructose 6-phosphate from N-acetylneuraminate: step 5/5. Its function is as follows. Catalyzes the reversible isomerization-deamination of glucosamine 6-phosphate (GlcN6P) to form fructose 6-phosphate (Fru6P) and ammonium ion. The protein is Glucosamine-6-phosphate deaminase of Alkaliphilus metalliredigens (strain QYMF).